Consider the following 607-residue polypeptide: Transporter aclS (607 aa).

12 consecutive transmembrane segments (helical) span residues 67-87 (LGGS…AVVL), 91-111 (IAAI…IGFP), 152-172 (LTVV…TAIL), 192-212 (VTTQ…PVLY), 221-241 (LMIG…IWSL), 262-282 (SLGF…SIAL), 317-337 (VFGQ…FGCL), 364-384 (AAAV…NVVD), 423-443 (GCYV…LASA), 445-465 (TFVS…GIHI), 500-520 (GVLP…HSIN), and 531-551 (HLYA…HTLV). Positions 583 to 607 (NKDSTEEDSDRSLRRESREVVETKV) are disordered. Residues 592–607 (DRSLRRESREVVETKV) show a composition bias toward basic and acidic residues.

This sequence belongs to the purine-cytosine permease (2.A.39) family.

Its subcellular location is the membrane. In terms of biological role, transporter; part of the gene cluster that mediates the biosynthesis of aspirochlorine (or antibiotic A30641), an unusual halogenated spiro compound with distinctive antifungal properties due to selective inhibition of protein biosynthesis, and which is also active against bacteria, viruses, and murine tumor cells. This Aspergillus oryzae (strain ATCC 42149 / RIB 40) (Yellow koji mold) protein is Transporter aclS.